The following is a 367-amino-acid chain: UDP-N-acetylglucosamine--N-acetylmuramyl-(pentapeptide) pyrophosphoryl-undecaprenol N-acetylglucosamine transferase (367 aa).

Residues 21–23 (TGG), Asn-129, Arg-170, Ser-198, and Gln-295 contribute to the UDP-N-acetyl-alpha-D-glucosamine site.

This sequence belongs to the glycosyltransferase 28 family. MurG subfamily.

The protein localises to the cell inner membrane. It carries out the reaction di-trans,octa-cis-undecaprenyl diphospho-N-acetyl-alpha-D-muramoyl-L-alanyl-D-glutamyl-meso-2,6-diaminopimeloyl-D-alanyl-D-alanine + UDP-N-acetyl-alpha-D-glucosamine = di-trans,octa-cis-undecaprenyl diphospho-[N-acetyl-alpha-D-glucosaminyl-(1-&gt;4)]-N-acetyl-alpha-D-muramoyl-L-alanyl-D-glutamyl-meso-2,6-diaminopimeloyl-D-alanyl-D-alanine + UDP + H(+). The protein operates within cell wall biogenesis; peptidoglycan biosynthesis. In terms of biological role, cell wall formation. Catalyzes the transfer of a GlcNAc subunit on undecaprenyl-pyrophosphoryl-MurNAc-pentapeptide (lipid intermediate I) to form undecaprenyl-pyrophosphoryl-MurNAc-(pentapeptide)GlcNAc (lipid intermediate II). This Synechococcus sp. (strain JA-2-3B'a(2-13)) (Cyanobacteria bacterium Yellowstone B-Prime) protein is UDP-N-acetylglucosamine--N-acetylmuramyl-(pentapeptide) pyrophosphoryl-undecaprenol N-acetylglucosamine transferase.